We begin with the raw amino-acid sequence, 160 residues long: Putative 4-hydroxy-4-methyl-2-oxoglutarate aldolase (160 aa).

Substrate contacts are provided by residues 76–79 (GDMI) and R98. An a divalent metal cation-binding site is contributed by D99.

Belongs to the class II aldolase/RraA-like family. As to quaternary structure, homotrimer. It depends on a divalent metal cation as a cofactor.

The enzyme catalyses 4-hydroxy-4-methyl-2-oxoglutarate = 2 pyruvate. It catalyses the reaction oxaloacetate + H(+) = pyruvate + CO2. Functionally, catalyzes the aldol cleavage of 4-hydroxy-4-methyl-2-oxoglutarate (HMG) into 2 molecules of pyruvate. Also contains a secondary oxaloacetate (OAA) decarboxylase activity due to the common pyruvate enolate transition state formed following C-C bond cleavage in the retro-aldol and decarboxylation reactions. This is Putative 4-hydroxy-4-methyl-2-oxoglutarate aldolase from Alcanivorax borkumensis (strain ATCC 700651 / DSM 11573 / NCIMB 13689 / SK2).